The chain runs to 332 residues: Fructose-1,6-bisphosphatase class 1 (332 aa).

Positions 89, 110, 112, and 113 each coordinate Mg(2+). Residues 113 to 116, Asn-206, Tyr-239, 257 to 259, and Lys-269 each bind substrate; these read DGSS and YLY. Glu-275 is a Mg(2+) binding site.

This sequence belongs to the FBPase class 1 family. As to quaternary structure, homotetramer. Mg(2+) serves as cofactor.

It localises to the cytoplasm. The catalysed reaction is beta-D-fructose 1,6-bisphosphate + H2O = beta-D-fructose 6-phosphate + phosphate. It participates in carbohydrate biosynthesis; gluconeogenesis. In Klebsiella pneumoniae (strain 342), this protein is Fructose-1,6-bisphosphatase class 1.